The primary structure comprises 252 residues: 2-succinyl-6-hydroxy-2,4-cyclohexadiene-1-carboxylate synthase (252 aa).

The protein belongs to the AB hydrolase superfamily. MenH family. As to quaternary structure, monomer.

It carries out the reaction 5-enolpyruvoyl-6-hydroxy-2-succinyl-cyclohex-3-ene-1-carboxylate = (1R,6R)-6-hydroxy-2-succinyl-cyclohexa-2,4-diene-1-carboxylate + pyruvate. The protein operates within quinol/quinone metabolism; 1,4-dihydroxy-2-naphthoate biosynthesis; 1,4-dihydroxy-2-naphthoate from chorismate: step 3/7. Its pathway is quinol/quinone metabolism; menaquinone biosynthesis. Its function is as follows. Catalyzes a proton abstraction reaction that results in 2,5-elimination of pyruvate from 2-succinyl-5-enolpyruvyl-6-hydroxy-3-cyclohexene-1-carboxylate (SEPHCHC) and the formation of 2-succinyl-6-hydroxy-2,4-cyclohexadiene-1-carboxylate (SHCHC). The sequence is that of 2-succinyl-6-hydroxy-2,4-cyclohexadiene-1-carboxylate synthase from Klebsiella pneumoniae (strain 342).